The chain runs to 105 residues: Small ribosomal subunit protein eS24 (105 aa).

The segment at 86-105 (LERNKIEADEEADEEAAEEA) is disordered. Over residues 93-105 (ADEEADEEAAEEA) the composition is skewed to acidic residues.

Belongs to the eukaryotic ribosomal protein eS24 family.

The sequence is that of Small ribosomal subunit protein eS24 from Natronomonas pharaonis (strain ATCC 35678 / DSM 2160 / CIP 103997 / JCM 8858 / NBRC 14720 / NCIMB 2260 / Gabara) (Halobacterium pharaonis).